Reading from the N-terminus, the 658-residue chain is Threonine--tRNA ligase (658 aa).

In terms of domain architecture, TGS spans 1–63; sequence MDQITITFPD…DDNASIDFVA (63 aa). Residues 245–548 are catalytic; the sequence is DHRKLGRELD…LIEHYAGNFP (304 aa). Zn(2+) is bound by residues Cys-341, His-392, and His-525.

The protein belongs to the class-II aminoacyl-tRNA synthetase family. In terms of assembly, homodimer. Requires Zn(2+) as cofactor.

The protein localises to the cytoplasm. The catalysed reaction is tRNA(Thr) + L-threonine + ATP = L-threonyl-tRNA(Thr) + AMP + diphosphate + H(+). In terms of biological role, catalyzes the attachment of threonine to tRNA(Thr) in a two-step reaction: L-threonine is first activated by ATP to form Thr-AMP and then transferred to the acceptor end of tRNA(Thr). Also edits incorrectly charged L-seryl-tRNA(Thr). The sequence is that of Threonine--tRNA ligase from Rhodopseudomonas palustris (strain ATCC BAA-98 / CGA009).